The chain runs to 761 residues: Isocyanide synthase xanB (761 aa).

The interval 24-128 (LLGSYETKAP…GKGTKADPSH (105 aa)) is disordered. Residues 36–48 (ETSEIAASSSSSE) show a composition bias toward low complexity. Polar residues predominate over residues 93–102 (TVSTPQSSDN). Over residues 115–126 (FKDEGKGTKADP) the composition is skewed to basic and acidic residues.

The protein belongs to the isocyanide synthase family.

It functions in the pathway secondary metabolite biosynthesis. Functionally, isocyanide synthase; part of the gene cluster that mediates the biosynthesis of the isocyanide xanthocillin and its derivatives. The first step of the pathway consists in the conversion of tyrosine into a vinyl-isonitrile intermediate by the isocyanide synthase xanB. Subsequent oxidative dimerization of this intermediate to form xanthocillin may involve the cytochrome P450 monooxygenase xanG, whose expression is coregulated with that of XanB. Xanthocillin can be further modified by the isonitrile hydratase-like protein xanA which introduces N-formyl groups and the methyltransferase xanE which introduces methyl groups, leading to the production of several derivatives including fumiformamide. Finally, fumiformamide can be subject to both oxidative and reductive cyclization to yield melanocins E and F, respectively. The polypeptide is Isocyanide synthase xanB (Aspergillus fumigatus (strain ATCC MYA-4609 / CBS 101355 / FGSC A1100 / Af293) (Neosartorya fumigata)).